We begin with the raw amino-acid sequence, 329 residues long: POU domain, class 5, transcription factor 2 (329 aa).

The segment covering 1 to 14 has biased composition (polar residues); that stretch reads MAGRRSSNVFPLSG. Residues 1-24 are disordered; the sequence is MAGRRSSNVFPLSGNSGGGLEVDT. The POU-specific domain maps to 107-181; sequence DVSAIQKEME…LLKMWLEEVD (75 aa). A DNA-binding region (homeobox) is located at residues 199-258; sequence RKRRRASRERRIGSNLEKLFLQCPEPTPQQISYIAGRLRLQKDLVQVWFSNRSQMGSWPT.

Belongs to the POU transcription factor family. Class-5 subfamily. In terms of tissue distribution, in adult brain, expressed in the olfactory bulb, becoming specifically concentrated in the mitral cell layer. Also found in the pyramidal cell layer of the hippocampus, in the granule cell layer of the cerebellum and in the cortex.

The protein resides in the nucleus. Its function is as follows. Transcription factor that binds preferentially to the octamer motif (5'-ATGTTAAT-3'). May exert a regulatory function in meiotic events that are required for terminal differentiation of male germ cell. The polypeptide is POU domain, class 5, transcription factor 2 (Pou5f2) (Mus musculus (Mouse)).